Here is a 132-residue protein sequence, read N- to C-terminus: Protein NrdI (132 aa).

It belongs to the NrdI family.

Functionally, probably involved in ribonucleotide reductase function. In Staphylococcus epidermidis (strain ATCC 35984 / DSM 28319 / BCRC 17069 / CCUG 31568 / BM 3577 / RP62A), this protein is Protein NrdI.